We begin with the raw amino-acid sequence, 333 residues long: Delta(9)-fatty-acid desaturase fat-5 (333 aa).

4 consecutive transmembrane segments (helical) span residues 42 to 62, 66 to 86, 187 to 207, and 210 to 230; these read NVAL…QLVF, WATV…VTGG, LPLV…VLWG, and AFIA…HATW.

Belongs to the fatty acid desaturase type 1 family. As to expression, expressed in the intestine in adult worms and in all four larval stages. Additional expression in the pharynx and tail cells after hatching and throughout the lifespan.

It localises to the membrane. The catalysed reaction is hexadecanoyl-CoA + 2 Fe(II)-[cytochrome b5] + O2 + 2 H(+) = (9Z)-hexadecenoyl-CoA + 2 Fe(III)-[cytochrome b5] + 2 H2O. It carries out the reaction tetradecanoyl-CoA + 2 Fe(II)-[cytochrome b5] + O2 + 2 H(+) = (9Z)-tetradecenoyl-CoA + 2 Fe(III)-[cytochrome b5] + 2 H2O. It catalyses the reaction heptadecanoyl-CoA + 2 Fe(II)-[cytochrome b5] + O2 + 2 H(+) = (9Z)-heptadecenoyl-CoA + 2 Fe(III)-[cytochrome b5] + 2 H2O. The enzyme catalyses pentadecanoyl-CoA + 2 Fe(II)-[cytochrome b5] + O2 + 2 H(+) = (9Z)-pentadecenoyl-CoA + 2 Fe(III)-[cytochrome b5] + 2 H2O. The protein operates within lipid metabolism; monounsaturated fatty acid biosynthesis. Functionally, delta(9)-fatty acid desaturase that acts preferentially on palmitoyl-CoA (hexadecanoyl-CoA) producing the monounsaturated palmitoleoyl-CoA ((9Z)-hexadecenoyl-CoA), which can be elongated to (11Z)-octadecenoyl-CoA (the most abundant monounsaturated fatty acid in Caenorhabditis elegans phospholipids and triacylglycerols). Also acts on pentadecanoyl-CoA, heptadecanoyl-CoA and myristoyl-CoA (tetradecanoyl-CoA), the monounsaturated fatty acids (MUFAs) produced are further used as substrates to synthesize polyunsaturated fatty acids (PUFAs) by several other desaturases and elongases. Unlike plants, Caenorhabditis elegans desaturases seem to use fatty acyl-CoAs as substrates. This chain is Delta(9)-fatty-acid desaturase fat-5 (fat-5), found in Caenorhabditis elegans.